Consider the following 339-residue polypeptide: Dihydroorotate dehydrogenase (quinone) (339 aa).

FMN is bound by residues 62–66 (AGMDK) and threonine 86. Lysine 66 is a binding site for substrate. Substrate is bound at residue 111 to 115 (NRMGF). Positions 139 and 172 each coordinate FMN. Asparagine 172 is a substrate binding site. Serine 175 (nucleophile) is an active-site residue. Position 177 (asparagine 177) interacts with substrate. Positions 217 and 245 each coordinate FMN. 246 to 247 (NT) contacts substrate. Residues glycine 268, glycine 297, and 318–319 (YS) each bind FMN.

Belongs to the dihydroorotate dehydrogenase family. Type 2 subfamily. In terms of assembly, monomer. It depends on FMN as a cofactor.

The protein localises to the cell membrane. The catalysed reaction is (S)-dihydroorotate + a quinone = orotate + a quinol. It functions in the pathway pyrimidine metabolism; UMP biosynthesis via de novo pathway; orotate from (S)-dihydroorotate (quinone route): step 1/1. Catalyzes the conversion of dihydroorotate to orotate with quinone as electron acceptor. The sequence is that of Dihydroorotate dehydrogenase (quinone) from Shewanella putrefaciens (strain CN-32 / ATCC BAA-453).